The following is a 341-amino-acid chain: Homeobox protein mls-2 (341 aa).

Disordered regions lie at residues 1-78 (MPTS…DSTN) and 139-209 (SNPD…TVFS). The span at 64–78 (TTQSSPSASSEDSTN) shows a compositional bias: polar residues. The segment covering 153-166 (KDEKSEGKDGETRD) has biased composition (basic and acidic residues). Residues 201 to 260 (KKKTRTVFSRSQVSQLEMMFECKRYLSSQERSNLAQKLHLTETQVKIWFQNRRNKFKRQA) constitute a DNA-binding region (homeobox).

The protein belongs to the HMX homeobox family. In terms of tissue distribution, expressed in a subset of head neurons, including AIM and ASK (at protein level).

The protein localises to the nucleus. Functionally, transcription factor that binds to the promoter of target genes. Regulates fate specification and/or differentiation of multiple cell types arising from the embryonic mesodermal (M) lineage and the ABp(l/r)paa precursors. In the postembryonic M lineage, regulates cleavage orientation, cell proliferation and cell fate specification. Regulates hlh-1 expression to specify coelomocyte fate in the mesodermal (M) lineage. In AWC neurons, initiates expression of ceh-36, leading to the expression of terminal differentiation genes. Regulates ventral cephalic sheath (CEPsh) glia differentiation and expression of transcription factor hlh-17 in CEPsh glia. Promotes terminal differentiation and morphogenesis of the epithelial duct and pore cells. In the duct cell, cooperates with the EGF-Ras-ERK pathway in turning on the terminal differentiation gene lin-48. The protein is Homeobox protein mls-2 of Caenorhabditis elegans.